The chain runs to 59 residues: Small, acid-soluble spore protein H 1 (59 aa).

It belongs to the SspH family.

It is found in the spore core. The sequence is that of Small, acid-soluble spore protein H 1 (sspH1) from Bacillus cereus (strain ATCC 14579 / DSM 31 / CCUG 7414 / JCM 2152 / NBRC 15305 / NCIMB 9373 / NCTC 2599 / NRRL B-3711).